A 702-amino-acid polypeptide reads, in one-letter code: MPVKSTKTKGGSTQGGSQAGGPSTLKVNKARVPAKGKKDDDDATEAGEHGGEEWMQTKSLIKPDDQLELNDQELKEEFTRILTANNPHAPQNIVRYSFKDCSFKQTSHVDQLAIHFSLDGNMIHKDSDEARRQQQRHGASEAISEQAISEAGEEKKEEDGEQKTEEPKEGEKRDEESTPAPAEAKSDQKLTNQFNFSERASQTYNNPYRERGTQTEPPPRANFSSTANQWEIYDAYMEDLEKQEKAKEKKAAPSKKDDDKSKKKLTALETQSDDMSRISHAAKIIERMVNQNTFDDVSQDFKYYEDMSDEFRDQEGTLLPLWKFSYDKSKRLAVTSVCWNPKYKDLFAVAHGSYDFMKQSRGMILFYTLKNPSFPEFVYPTDSGVMCIDIRPEHPYLICVGYCDGSVGVFNVTSTDANPVFQSTAKTGKHTDPVWQVAWQKDDLDNNLNFFSVSSDGRVVAWTLVKNELTYTDVIQLQLDSAPQDGPEGTQLTPLGCGTCFDFHKQTDYLFLVGTEEGKIHKCSKAYSSQFLDTFEAHHMAVYKVMWNHFHPKIFISCSADWSVKIWDHTYRNGPMFTFDLGSAVGDVAWAPYSSTVFAAVTADGKVHVFDLNLNKYEPICEQAVVQKKKTKLTHITFNPNFPIVLVGDDRGYVSSLKLSPNLRKVPKDKKGAALNHGPEAEIAKMDKLLALVREPPKDNKS.

A compositionally biased stretch (low complexity) spans 1–11 (MPVKSTKTKGG). 3 disordered regions span residues 1–64 (MPVK…IKPD), 128–226 (DEAR…FSST), and 243–272 (QEKAKEKKAAPSKKDDDKSKKKLTALETQS). Basic and acidic residues-rich tracts occupy residues 36–52 (GKKDDDDATEAGEHGGE) and 152–176 (GEEKKEEDGEQKTEEPKEGEKRDEE). Positions 189 to 206 (KLTNQFNFSERASQTYNN) are enriched in polar residues. Residues 243–261 (QEKAKEKKAAPSKKDDDKS) show a composition bias toward basic and acidic residues. WD repeat units follow at residues 380–420 (PTDS…ANPV), 429–472 (KHTD…LTYT), 490–533 (TQLT…QFLD), 537–577 (AHHM…GPMF), 580–620 (DLGS…YEPI), and 628–667 (KKKTKLTHITFNPNFPIVLVGDDRGYVSSLKLSPNLRKVP).

The protein belongs to the dynein intermediate chain family. Consists of at least two heavy chains (alpha and beta), three intermediate chains and several light chains.

Its subcellular location is the cytoplasm. The protein localises to the cytoskeleton. It localises to the cilium axoneme. In terms of biological role, microtubule-binding protein that may be involved in dynein outer arm assembly on the axoneme. The sequence is that of Dynein intermediate chain 2, ciliary from Heliocidaris crassispina (Sea urchin).